The following is a 428-amino-acid chain: Peptidase B (428 aa).

Mn(2+) contacts are provided by lysine 195 and aspartate 200. The active site involves lysine 207. 3 residues coordinate Mn(2+): aspartate 218, aspartate 277, and glutamate 279. The active site involves arginine 281.

The protein belongs to the peptidase M17 family. Homohexamer. Mn(2+) serves as cofactor.

The protein resides in the cytoplasm. It catalyses the reaction Release of an N-terminal amino acid, Xaa, from a peptide or arylamide. Xaa is preferably Glu or Asp but may be other amino acids, including Leu, Met, His, Cys and Gln.. Probably plays an important role in intracellular peptide degradation. This is Peptidase B from Cronobacter sakazakii (strain ATCC BAA-894) (Enterobacter sakazakii).